Here is a 605-residue protein sequence, read N- to C-terminus: Kelch-like protein 41b (605 aa).

Positions 32-102 (VDCTLKIGDR…YSAEIDLVDD (71 aa)) constitute a BTB domain. One can recognise a BACK domain in the interval 136–238 (CLAVFRLGLV…PEKYFREKVE (103 aa)). Kelch repeat units lie at residues 345–397 (QLFI…ESEN), 398–446 (LLFA…SHNN), 447–494 (LVYC…VHKG), 496–541 (IIVT…SSGG), and 543–598 (LFSI…MRLN).

It is found in the cytoplasm. The protein localises to the cytoskeleton. The protein resides in the sarcoplasmic reticulum membrane. It localises to the endoplasmic reticulum membrane. In terms of biological role, involved in skeletal muscle development and maintenance. The protein is Kelch-like protein 41b of Danio rerio (Zebrafish).